A 79-amino-acid chain; its full sequence is uncharacterized protein (79 aa).

Belongs to the asfivirus D79L family.

This is an uncharacterized protein from African swine fever virus (isolate Tick/South Africa/Pretoriuskop Pr4/1996) (ASFV).